The primary structure comprises 269 residues: Phosphatidylglycerol--prolipoprotein diacylglyceryl transferase (269 aa).

Transmembrane regions (helical) follow at residues 10 to 30 (IAVS…LIGF), 56 to 76 (AIFY…ILFY), 91 to 111 (IWEG…AMFF), 126 to 146 (FLAP…FIGG), 172 to 192 (PSQL…LWFF), 200 to 220 (YCVS…VEFV), and 237 to 257 (EGQL…MAGL). Position 139 (Arg139) interacts with a 1,2-diacyl-sn-glycero-3-phospho-(1'-sn-glycerol).

Belongs to the Lgt family.

It localises to the cell inner membrane. The enzyme catalyses L-cysteinyl-[prolipoprotein] + a 1,2-diacyl-sn-glycero-3-phospho-(1'-sn-glycerol) = an S-1,2-diacyl-sn-glyceryl-L-cysteinyl-[prolipoprotein] + sn-glycerol 1-phosphate + H(+). It participates in protein modification; lipoprotein biosynthesis (diacylglyceryl transfer). Functionally, catalyzes the transfer of the diacylglyceryl group from phosphatidylglycerol to the sulfhydryl group of the N-terminal cysteine of a prolipoprotein, the first step in the formation of mature lipoproteins. This is Phosphatidylglycerol--prolipoprotein diacylglyceryl transferase from Marinomonas sp. (strain MWYL1).